Reading from the N-terminus, the 132-residue chain is Protamine (132 aa).

Disordered regions lie at residues Gly17–Arg46 and Ser96–Arg115. 2 stretches are compositionally biased toward basic residues: residues Gly18–Arg46 and Leu98–Arg115.

Belongs to the UPF0771 family. Testis.

It localises to the nucleus. Its subcellular location is the chromosome. Its function is as follows. Protamines substitute for histones in the chromatin of sperm during the haploid phase of spermatogenesis. They compact sperm DNA into a highly condensed, stable and inactive complex. This Anthonomus grandis (Mexican cotton boll weevil) protein is Protamine.